The primary structure comprises 184 residues: Ribosome-recycling factor (184 aa).

It belongs to the RRF family.

It is found in the cytoplasm. Its function is as follows. Responsible for the release of ribosomes from messenger RNA at the termination of protein biosynthesis. May increase the efficiency of translation by recycling ribosomes from one round of translation to another. The sequence is that of Ribosome-recycling factor from Staphylococcus carnosus (strain TM300).